Here is a 191-residue protein sequence, read N- to C-terminus: Elongation factor P (191 aa).

Lys34 is subject to N6-(3,6-diaminohexanoyl)-5-hydroxylysine.

Belongs to the elongation factor P family. In terms of processing, may be beta-lysylated on the epsilon-amino group of Lys-34 by the combined action of EpmA and EpmB, and then hydroxylated on the C5 position of the same residue by EpmC (if this protein is present). Lysylation is critical for the stimulatory effect of EF-P on peptide-bond formation. The lysylation moiety may extend toward the peptidyltransferase center and stabilize the terminal 3-CCA end of the tRNA. Hydroxylation of the C5 position on Lys-34 may allow additional potential stabilizing hydrogen-bond interactions with the P-tRNA.

It is found in the cytoplasm. It functions in the pathway protein biosynthesis; polypeptide chain elongation. Its function is as follows. Involved in peptide bond synthesis. Alleviates ribosome stalling that occurs when 3 or more consecutive Pro residues or the sequence PPG is present in a protein, possibly by augmenting the peptidyl transferase activity of the ribosome. Modification of Lys-34 is required for alleviation. The protein is Elongation factor P of Marinomonas sp. (strain MWYL1).